Consider the following 73-residue polypeptide: Dipeptidyl peptidase 3 (73 aa).

Belongs to the peptidase M49 family. Zn(2+) is required as a cofactor.

The protein resides in the membrane. The enzyme catalyses Release of an N-terminal dipeptide from a peptide comprising four or more residues, with broad specificity. Also acts on dipeptidyl 2-naphthylamides.. Functionally, degrades neuropeptide proctolin (RYLPT) by cleavage between Tyr and Leu residues. The polypeptide is Dipeptidyl peptidase 3 (Blaberus craniifer (Death's head cockroach)).